The primary structure comprises 647 residues: Threonine--tRNA ligase (647 aa).

The TGS domain maps to 1-61 (MINITFPDGA…TEDGSIEIVT (61 aa)). Residues 242 to 540 (DHRKLGKELD…LIENYKGAFP (299 aa)) form a catalytic region. Cysteine 336, histidine 387, and histidine 517 together coordinate Zn(2+).

This sequence belongs to the class-II aminoacyl-tRNA synthetase family. Homodimer. Zn(2+) is required as a cofactor.

It is found in the cytoplasm. It catalyses the reaction tRNA(Thr) + L-threonine + ATP = L-threonyl-tRNA(Thr) + AMP + diphosphate + H(+). Its function is as follows. Catalyzes the attachment of threonine to tRNA(Thr) in a two-step reaction: L-threonine is first activated by ATP to form Thr-AMP and then transferred to the acceptor end of tRNA(Thr). Also edits incorrectly charged L-seryl-tRNA(Thr). This Streptococcus pneumoniae serotype 19F (strain G54) protein is Threonine--tRNA ligase.